A 357-amino-acid polypeptide reads, in one-letter code: Phenylalanine--tRNA ligase alpha subunit (357 aa).

Mg(2+) is bound at residue Glu-258.

Belongs to the class-II aminoacyl-tRNA synthetase family. Phe-tRNA synthetase alpha subunit type 1 subfamily. In terms of assembly, tetramer of two alpha and two beta subunits. The cofactor is Mg(2+).

The protein localises to the cytoplasm. It catalyses the reaction tRNA(Phe) + L-phenylalanine + ATP = L-phenylalanyl-tRNA(Phe) + AMP + diphosphate + H(+). The sequence is that of Phenylalanine--tRNA ligase alpha subunit from Caulobacter vibrioides (strain ATCC 19089 / CIP 103742 / CB 15) (Caulobacter crescentus).